Reading from the N-terminus, the 160-residue chain is MKNNADYIEMKVPAQPEYVGIIRLTLSGVASRMGYTYDEIEDLKIAVSEACTNAVQHAYKEDKNGEVSIRFGVFEDRLEVIVADEGDSFDFDQKQQDLGPYTPSHTVDQLSEGGLGLYLMETLMDEVRVQNHSGVTVAMTKYLNGERVDHDTTIKNYETN.

As to quaternary structure, homodimer. In stressed cells, forms a complex with RsbV. The predominant form of this complex has a stoichiometry of 2:2 (one dimer of RsbW is bound by two monomers of RsbV). In unstressed cells, forms a 2:1 complex with sigma-B.

The enzyme catalyses L-seryl-[protein] + ATP = O-phospho-L-seryl-[protein] + ADP + H(+). It carries out the reaction L-threonyl-[protein] + ATP = O-phospho-L-threonyl-[protein] + ADP + H(+). Its activity is regulated as follows. The higher affinity of RsbW for RsbV than for sigma-B, rather than a difference in the concentrations of RsbV and sigma-B, is the driving force that is responsible for the switch of RsbW to non-phosphorylated RsbV. The kinase activity of RsbW is directly regulated by changes in the ATP/ADP ratio. Its function is as follows. Negative regulator of sigma-B activity. Phosphorylates and inactivates its specific antagonist protein, RsbV. Upon phosphorylation of RsbV, RsbW is released and binds to sigma-B, thereby blocking its ability to form an RNA polymerase holoenzyme (E-sigma-B). This chain is Serine-protein kinase RsbW (rsbW), found in Bacillus subtilis (strain 168).